Here is a 681-residue protein sequence, read N- to C-terminus: Chaperone protein HtpG (681 aa).

The a; substrate-binding stretch occupies residues Met1–Arg326. The interval Ser327–Asn545 is b. A c region spans residues Ile546–Ile681. Residues Ile589–Lys620 are disordered. Over residues Arg599–Lys620 the composition is skewed to basic and acidic residues.

It belongs to the heat shock protein 90 family. In terms of assembly, homodimer.

It localises to the cytoplasm. Functionally, molecular chaperone. Has ATPase activity. This chain is Chaperone protein HtpG, found in Bacteroides thetaiotaomicron (strain ATCC 29148 / DSM 2079 / JCM 5827 / CCUG 10774 / NCTC 10582 / VPI-5482 / E50).